Here is a 620-residue protein sequence, read N- to C-terminus: Chaperone protein HscA homolog (620 aa).

It belongs to the heat shock protein 70 family.

Chaperone involved in the maturation of iron-sulfur cluster-containing proteins. Has a low intrinsic ATPase activity which is markedly stimulated by HscB. In Shewanella piezotolerans (strain WP3 / JCM 13877), this protein is Chaperone protein HscA homolog.